Reading from the N-terminus, the 357-residue chain is Putative ABC transporter ATP-binding protein MG303 (357 aa).

Residues 72-312 (LFFNNISVFV…TSWLMQYGIT (241 aa)) form the ABC transporter domain. 107 to 114 (GESGSGKT) lines the ATP pocket.

This sequence belongs to the ABC transporter superfamily.

This Mycoplasma genitalium (strain ATCC 33530 / DSM 19775 / NCTC 10195 / G37) (Mycoplasmoides genitalium) protein is Putative ABC transporter ATP-binding protein MG303.